A 325-amino-acid polypeptide reads, in one-letter code: Beta-ketoacyl-[acyl-carrier-protein] synthase III (325 aa).

Residues Cys-112 and His-250 contribute to the active site. The ACP-binding stretch occupies residues 251–255 (QANSR). Asn-280 is a catalytic residue.

Belongs to the thiolase-like superfamily. FabH family. In terms of assembly, homodimer.

It is found in the cytoplasm. It carries out the reaction malonyl-[ACP] + acetyl-CoA + H(+) = 3-oxobutanoyl-[ACP] + CO2 + CoA. Its pathway is lipid metabolism; fatty acid biosynthesis. In terms of biological role, catalyzes the condensation reaction of fatty acid synthesis by the addition to an acyl acceptor of two carbons from malonyl-ACP. Catalyzes the first condensation reaction which initiates fatty acid synthesis and may therefore play a role in governing the total rate of fatty acid production. Possesses both acetoacetyl-ACP synthase and acetyl transacylase activities. Its substrate specificity determines the biosynthesis of branched-chain and/or straight-chain of fatty acids. This is Beta-ketoacyl-[acyl-carrier-protein] synthase III from Lactococcus lactis subsp. cremoris (strain MG1363).